We begin with the raw amino-acid sequence, 151 residues long: Ribosome maturation factor RimP (151 aa).

The protein belongs to the RimP family.

It is found in the cytoplasm. Required for maturation of 30S ribosomal subunits. The protein is Ribosome maturation factor RimP of Shewanella piezotolerans (strain WP3 / JCM 13877).